The following is a 183-amino-acid chain: UPF0397 protein VFMJ11_1662 (183 aa).

5 helical membrane-spanning segments follow: residues 8–28, 41–61, 75–95, 110–130, and 147–167; these read VVVI…MFGI, AVLA…VGFI, WLTW…FPII, FLIF…TSAF, and LCII…FILN.

It belongs to the UPF0397 family.

It localises to the cell membrane. The polypeptide is UPF0397 protein VFMJ11_1662 (Aliivibrio fischeri (strain MJ11) (Vibrio fischeri)).